The chain runs to 418 residues: Secernin-3 (418 aa).

Positions 1 to 5 (MEPYS) are excised as a propeptide. Cys6 is a catalytic residue. Cys6 bears the Glyoxylic acid (Cys); alternate mark. At Cys6 the chain carries Pyruvic acid (Cys); alternate.

The protein belongs to the peptidase C69 family. Secernin subfamily.

Functionally, plays a role in thermal nociception. The sequence is that of Secernin-3 (Scrn3) from Mus musculus (Mouse).